Reading from the N-terminus, the 216-residue chain is Sperm microtubule inner protein 8 (216 aa).

Microtubule inner protein component of sperm flagellar doublet microtubules.

The protein resides in the cytoplasm. It is found in the cytoskeleton. It localises to the flagellum axoneme. Functionally, microtubule inner protein (MIP) part of the dynein-decorated doublet microtubules (DMTs) in flagellum axoneme. May serve to reinforce and thus stabilize the microtubule structure in the sperm flagella. The chain is Sperm microtubule inner protein 8 (Spmip8) from Rattus norvegicus (Rat).